A 520-amino-acid chain; its full sequence is Cysteine--tRNA ligase (520 aa).

Residue Cys-29 coordinates Zn(2+). The short motif at 31–41 (PTVYNYPHLGN) is the 'HIGH' region element. Positions 227, 252, and 256 each coordinate Zn(2+). A 'KMSKS' region motif is present at residues 301 to 305 (KMSKS). Lys-304 contributes to the ATP binding site.

It belongs to the class-I aminoacyl-tRNA synthetase family. In terms of assembly, monomer. Requires Zn(2+) as cofactor.

It is found in the cytoplasm. It carries out the reaction tRNA(Cys) + L-cysteine + ATP = L-cysteinyl-tRNA(Cys) + AMP + diphosphate. The protein is Cysteine--tRNA ligase (cysS) of Treponema pallidum (strain Nichols).